Consider the following 133-residue polypeptide: uncharacterized protein (133 aa).

Residues 36–56 (LPMLIALACIFLLLATCLLFM) form a helical membrane-spanning segment. The segment at 105–133 (HGRPTVPRQPLPGPEDNRSHCDYMESTKM) is disordered. Residues 119–133 (EDNRSHCDYMESTKM) show a composition bias toward basic and acidic residues.

It is found in the membrane. This is an uncharacterized protein from Homo sapiens (Human).